The primary structure comprises 199 residues: Chaperone protein TorD (199 aa).

The protein belongs to the TorD/DmsD family. TorD subfamily.

Its subcellular location is the cytoplasm. Its function is as follows. Involved in the biogenesis of TorA. Acts on TorA before the insertion of the molybdenum cofactor and, as a result, probably favors a conformation of the apoenzyme that is competent for acquiring the cofactor. The polypeptide is Chaperone protein TorD (Escherichia coli O127:H6 (strain E2348/69 / EPEC)).